The following is a 224-amino-acid chain: Octanoyltransferase (224 aa).

The BPL/LPL catalytic domain occupies 38 to 213; the sequence is SATVDELWWV…YLVRRLGYSA (176 aa). Substrate-binding positions include 77-84, 144-146, and 157-159; these read RGGQVTYH, SLG, and GLS. The active-site Acyl-thioester intermediate is C175.

Belongs to the LipB family.

The protein resides in the cytoplasm. It carries out the reaction octanoyl-[ACP] + L-lysyl-[protein] = N(6)-octanoyl-L-lysyl-[protein] + holo-[ACP] + H(+). It functions in the pathway protein modification; protein lipoylation via endogenous pathway; protein N(6)-(lipoyl)lysine from octanoyl-[acyl-carrier-protein]: step 1/2. Catalyzes the transfer of endogenously produced octanoic acid from octanoyl-acyl-carrier-protein onto the lipoyl domains of lipoate-dependent enzymes. Lipoyl-ACP can also act as a substrate although octanoyl-ACP is likely to be the physiological substrate. This chain is Octanoyltransferase, found in Nitrosococcus oceani (strain ATCC 19707 / BCRC 17464 / JCM 30415 / NCIMB 11848 / C-107).